The sequence spans 388 residues: Chaperone protein DnaJ (388 aa).

The J domain occupies 5 to 70 (DYYTTLNISN…KKRNLYDQYG (66 aa)). The CR-type zinc-finger motif lies at 135-213 (GIKKEIRIPK…CFGQGRIKKS (79 aa)). The Zn(2+) site is built by Cys-148, Cys-151, Cys-165, Cys-168, Cys-187, Cys-190, Cys-201, and Cys-204. CXXCXGXG motif repeat units lie at residues 148–155 (CQSCYGYG), 165–172 (CTSCNGHG), 187–194 (CSTCRGTG), and 201–208 (CKICFGQG).

Belongs to the DnaJ family. In terms of assembly, homodimer. Zn(2+) serves as cofactor.

It is found in the cytoplasm. Participates actively in the response to hyperosmotic and heat shock by preventing the aggregation of stress-denatured proteins and by disaggregating proteins, also in an autonomous, DnaK-independent fashion. Unfolded proteins bind initially to DnaJ; upon interaction with the DnaJ-bound protein, DnaK hydrolyzes its bound ATP, resulting in the formation of a stable complex. GrpE releases ADP from DnaK; ATP binding to DnaK triggers the release of the substrate protein, thus completing the reaction cycle. Several rounds of ATP-dependent interactions between DnaJ, DnaK and GrpE are required for fully efficient folding. Also involved, together with DnaK and GrpE, in the DNA replication of plasmids through activation of initiation proteins. The sequence is that of Chaperone protein DnaJ from Buchnera aphidicola subsp. Cinara cedri (strain Cc).